Consider the following 486-residue polypeptide: NGFI-A-binding protein 1 (486 aa).

The segment at 4 to 82 is NCD1; sequence ALPRTLGELQ…RDWVTNPGLF (79 aa). Residues lysine 126, lysine 129, and lysine 143 each participate in a glycyl lysine isopeptide (Lys-Gly) (interchain with G-Cter in SUMO2) cross-link. A disordered region spans residues 160 to 187; the sequence is WQGHHATESEHSLSPADLGSPASPKESS. Phosphoserine is present on residues serine 171 and serine 182. Lysine 211 is covalently cross-linked (Glycyl lysine isopeptide (Lys-Gly) (interchain with G-Cter in SUMO2)). The interval 220 to 309 is NCD2; the sequence is LLKNNKKLAK…ARQVSREVTY (90 aa). The tract at residues 306 to 337 is necessary for nuclear localization; the sequence is EVTYKYTYRTTRLKCGERDELSPKRIKIEDGF. The residue at position 327 (serine 327) is a Phosphoserine. A Glycyl lysine isopeptide (Lys-Gly) (interchain with G-Cter in SUMO1); alternate cross-link involves residue lysine 332. A Glycyl lysine isopeptide (Lys-Gly) (interchain with G-Cter in SUMO2); alternate cross-link involves residue lysine 332. Glycyl lysine isopeptide (Lys-Gly) (interchain with G-Cter in SUMO2) cross-links involve residues lysine 354, lysine 368, and lysine 372. The disordered stretch occupies residues 398-438; the sequence is RQSSGEQSPDGGLPSDSSDGQGERPLNLRIPSVQNRQPHHF. Over residues 404 to 417 the composition is skewed to low complexity; sequence QSPDGGLPSDSSDG. Serine 405 bears the Phosphoserine mark. Residues lysine 453, lysine 464, and lysine 476 each participate in a glycyl lysine isopeptide (Lys-Gly) (interchain with G-Cter in SUMO2) cross-link. A Glycyl lysine isopeptide (Lys-Gly) (interchain with G-Cter in SUMO1); alternate cross-link involves residue lysine 479. Lysine 479 participates in a covalent cross-link: Glycyl lysine isopeptide (Lys-Gly) (interchain with G-Cter in SUMO2); alternate.

It belongs to the NAB family. Homomultimers may associate with EGR1 bound to DNA. As to expression, widely expressed in adult. In day 16 embryo highest levels in forebrain, thymus, salivary gland and cartilage.

Its subcellular location is the nucleus. Functionally, acts as a transcriptional repressor for zinc finger transcription factors EGR1 and EGR2. The protein is NGFI-A-binding protein 1 (Nab1) of Mus musculus (Mouse).